The primary structure comprises 467 residues: Serine/threonine-protein kinase SSN3 (467 aa).

Polar residues-rich tracts occupy residues 1–12 (MSFSNLPPSSGR) and 29–39 (GSSSFTANNPS). Residues 1–45 (MSFSNLPPSSGRGSHADGASGRSMPPFPGSSSFTANNPSKGIHPN) are disordered. The Protein kinase domain maps to 79 to 408 (YLIVGFISSG…AKEALNHPYF (330 aa)). ATP is bound by residues 85 to 93 (ISSGTYGRV) and Lys-109. Asp-211 (proton acceptor) is an active-site residue. Positions 426-467 (YPNRRVSQDDNDIRSGSLPGTKRSGLPDDTLTSRAAKRAREM) are disordered.

This sequence belongs to the protein kinase superfamily. CMGC Ser/Thr protein kinase family. CDC2/CDKX subfamily. In terms of assembly, component of the SRB8-11 complex, a regulatory module of the Mediator complex. Requires Mg(2+) as cofactor.

The protein resides in the nucleus. The catalysed reaction is L-seryl-[protein] + ATP = O-phospho-L-seryl-[protein] + ADP + H(+). It catalyses the reaction L-threonyl-[protein] + ATP = O-phospho-L-threonyl-[protein] + ADP + H(+). The enzyme catalyses [DNA-directed RNA polymerase] + ATP = phospho-[DNA-directed RNA polymerase] + ADP + H(+). Component of the SRB8-11 complex. The SRB8-11 complex is a regulatory module of the Mediator complex which is itself involved in regulation of basal and activated RNA polymerase II-dependent transcription. The SRB8-11 complex may be involved in the transcriptional repression of a subset of genes regulated by Mediator. It may inhibit the association of the Mediator complex with RNA polymerase II to form the holoenzyme complex. The SRB8-11 complex phosphorylates the C-terminal domain (CTD) of the largest subunit of RNA polymerase II. This Coccidioides immitis (strain RS) (Valley fever fungus) protein is Serine/threonine-protein kinase SSN3 (SSN3).